The following is a 376-amino-acid chain: Erythronate-4-phosphate dehydrogenase (376 aa).

Residues Ser-45 and Thr-67 each contribute to the substrate site. Residues 127-128 (QV), Asp-147, and Thr-176 each bind NAD(+). Residue Arg-209 is part of the active site. Asp-233 contributes to the NAD(+) binding site. Residue Glu-238 is part of the active site. Catalysis depends on His-255, which acts as the Proton donor. An NAD(+)-binding site is contributed by Gly-258. Tyr-259 provides a ligand contact to substrate.

Belongs to the D-isomer specific 2-hydroxyacid dehydrogenase family. PdxB subfamily. As to quaternary structure, homodimer.

The protein localises to the cytoplasm. It carries out the reaction 4-phospho-D-erythronate + NAD(+) = (R)-3-hydroxy-2-oxo-4-phosphooxybutanoate + NADH + H(+). Its pathway is cofactor biosynthesis; pyridoxine 5'-phosphate biosynthesis; pyridoxine 5'-phosphate from D-erythrose 4-phosphate: step 2/5. Catalyzes the oxidation of erythronate-4-phosphate to 3-hydroxy-2-oxo-4-phosphonooxybutanoate. In Aliivibrio salmonicida (strain LFI1238) (Vibrio salmonicida (strain LFI1238)), this protein is Erythronate-4-phosphate dehydrogenase.